Here is a 221-residue protein sequence, read N- to C-terminus: Ependymin (221 aa).

Residues 1 to 21 (MQAFAVAALSIWLCLGATTLA) form the signal peptide. N-linked (GlcNAc...) asparagine glycosylation is found at Asn37, Asn77, and Asn101.

Belongs to the ependymin family. In terms of assembly, forms disulfide-linked dimers. Binds calcium through the terminal sialic acids. In terms of tissue distribution, EPDs are synthesized in the meninx and secreted in the cerebrospinal fluid.

Its subcellular location is the secreted. May play a role in neural plasticity. May be involved during axon regeneration. The polypeptide is Ependymin (epd) (Esox lucius (Northern pike)).